The following is an 89-amino-acid chain: Small ribosomal subunit protein uS14A (89 aa).

This sequence belongs to the universal ribosomal protein uS14 family. Part of the 30S ribosomal subunit. Contacts proteins S3 and S10.

Functionally, binds 16S rRNA, required for the assembly of 30S particles and may also be responsible for determining the conformation of the 16S rRNA at the A site. The chain is Small ribosomal subunit protein uS14A from Oceanobacillus iheyensis (strain DSM 14371 / CIP 107618 / JCM 11309 / KCTC 3954 / HTE831).